Reading from the N-terminus, the 198-residue chain is Imidazole glycerol phosphate synthase subunit HisH (198 aa).

Positions Lys2–Leu198 constitute a Glutamine amidotransferase type-1 domain. Cys80 acts as the Nucleophile in catalysis. Residues His176 and Glu178 contribute to the active site.

In terms of assembly, heterodimer of HisH and HisF.

It localises to the cytoplasm. It catalyses the reaction 5-[(5-phospho-1-deoxy-D-ribulos-1-ylimino)methylamino]-1-(5-phospho-beta-D-ribosyl)imidazole-4-carboxamide + L-glutamine = D-erythro-1-(imidazol-4-yl)glycerol 3-phosphate + 5-amino-1-(5-phospho-beta-D-ribosyl)imidazole-4-carboxamide + L-glutamate + H(+). The catalysed reaction is L-glutamine + H2O = L-glutamate + NH4(+). Its pathway is amino-acid biosynthesis; L-histidine biosynthesis; L-histidine from 5-phospho-alpha-D-ribose 1-diphosphate: step 5/9. IGPS catalyzes the conversion of PRFAR and glutamine to IGP, AICAR and glutamate. The HisH subunit catalyzes the hydrolysis of glutamine to glutamate and ammonia as part of the synthesis of IGP and AICAR. The resulting ammonia molecule is channeled to the active site of HisF. The protein is Imidazole glycerol phosphate synthase subunit HisH of Thermus thermophilus (strain ATCC BAA-163 / DSM 7039 / HB27).